We begin with the raw amino-acid sequence, 414 residues long: Isocitrate dehydrogenase [NADP] cytoplasmic (414 aa).

Residue serine 2 is modified to N-acetylserine. At tyrosine 42 the chain carries Phosphotyrosine. 75–77 (TIT) contributes to the NADP(+) binding site. Residue threonine 77 participates in substrate binding. Residue lysine 81 is modified to N6-acetyllysine. Arginine 82 contributes to the NADP(+) binding site. Substrate-binding positions include 94-100 (SPNGTIR) and arginine 109. Lysine 126 bears the N6-succinyllysine mark. 2 residues coordinate substrate: arginine 132 and lysine 212. An N6-acetyllysine mark is found at lysine 224 and lysine 233. Aspartate 252 is a binding site for Mn(2+). An NADP(+)-binding site is contributed by lysine 260. 2 residues coordinate Mn(2+): aspartate 275 and aspartate 279. 310-315 (GTVTRH) provides a ligand contact to NADP(+). At lysine 321 the chain carries N6-acetyllysine. NADP(+) is bound at residue asparagine 328. Position 389 is a phosphoserine (serine 389). Lysine 400 is modified (N6-succinyllysine).

Belongs to the isocitrate and isopropylmalate dehydrogenases family. In terms of assembly, homodimer. Mg(2+) serves as cofactor. The cofactor is Mn(2+). Post-translationally, acetylation at Lys-374 dramatically reduces catalytic activity.

The protein resides in the cytoplasm. The protein localises to the cytosol. It catalyses the reaction D-threo-isocitrate + NADP(+) = 2-oxoglutarate + CO2 + NADPH. Its function is as follows. Catalyzes the NADP(+)-dependent oxidative decarboxylation of isocitrate (D-threo-isocitrate) to 2-ketoglutarate (2-oxoglutarate), which is required by other enzymes such as the phytanoyl-CoA dioxygenase. Plays a critical role in the generation of NADPH, an important cofactor in many biosynthesis pathways. May act as a corneal epithelial crystallin and may be involved in maintaining corneal epithelial transparency. The sequence is that of Isocitrate dehydrogenase [NADP] cytoplasmic (IDH1) from Ovis aries (Sheep).